We begin with the raw amino-acid sequence, 82 residues long: RNA-binding protein Hfq (82 aa).

Positions 11–71 (DTFLNHVRKT…ISTIMPGAPI (61 aa)) constitute a Sm domain.

This sequence belongs to the Hfq family. Homohexamer.

RNA chaperone that binds small regulatory RNA (sRNAs) and mRNAs to facilitate mRNA translational regulation in response to envelope stress, environmental stress and changes in metabolite concentrations. Also binds with high specificity to tRNAs. The sequence is that of RNA-binding protein Hfq from Nitrobacter winogradskyi (strain ATCC 25391 / DSM 10237 / CIP 104748 / NCIMB 11846 / Nb-255).